The sequence spans 490 residues: MSNANNNQPENVSLNAFKQPRAFYLIFSIELWERFGYYGLQGIMAVYLVKMLGMTEADSITLFSSFSALVYGFVAIGGWLGDKVLGAKRVIMLGALVLAIGYAFVAYSGHDLSLVYVGMATIAVGNGLFKANPSSLLSTCYEKNDPRLDGAFTMYYMSVNIGSFFSMLATPWLAARFGWSVAFSLSVVGMLITLVNFMMCRRWVKDQGSKPDFAPLQVGKLMMTLVGVVILVAISTWLLHNQTIARWALAIISAGIILIFAKETFALQGGARRKMIVAFLLMLEAVVFFVLYSQMPTSLNFFAIHNVEHSIFGIAFEPEQYQALNPFWIMVASPILAAIYNKMGDRLPMPHKFAIGMVLCSGAFLVLPWGASFANEAGIVSVNWLILSYALQSIGELMISGLGLAMVAQLVPQRLMGFIMGSWFLTTAAAALIAGKVAALTAVPGGEVADPHASLAIYSHVFMQIGLATAVIAVLMLLTAPKLNRMTLGD.

Over 1 to 34 (MSNANNNQPENVSLNAFKQPRAFYLIFSIELWER) the chain is Cytoplasmic. The helical transmembrane segment at 35-55 (FGYYGLQGIMAVYLVKMLGMT) threads the bilayer. Topologically, residues 56-59 (EADS) are periplasmic. The helical transmembrane segment at 60-80 (ITLFSSFSALVYGFVAIGGWL) threads the bilayer. Topologically, residues 81–89 (GDKVLGAKR) are cytoplasmic. The helical transmembrane segment at 90 to 110 (VIMLGALVLAIGYAFVAYSGH) threads the bilayer. Residue Asp111 is a topological domain, periplasmic. Residues 112-132 (LSLVYVGMATIAVGNGLFKAN) traverse the membrane as a helical segment. The Cytoplasmic portion of the chain corresponds to 133 to 153 (PSSLLSTCYEKNDPRLDGAFT). Residues 154-174 (MYYMSVNIGSFFSMLATPWLA) traverse the membrane as a helical segment. Topologically, residues 175 to 176 (AR) are periplasmic. A helical transmembrane segment spans residues 177 to 197 (FGWSVAFSLSVVGMLITLVNF). At 198–217 (MMCRRWVKDQGSKPDFAPLQ) the chain is on the cytoplasmic side. A helical membrane pass occupies residues 218–238 (VGKLMMTLVGVVILVAISTWL). The Periplasmic portion of the chain corresponds to 239-246 (LHNQTIAR). A helical transmembrane segment spans residues 247–267 (WALAIISAGIILIFAKETFAL). At 268–274 (QGGARRK) the chain is on the cytoplasmic side. A helical transmembrane segment spans residues 275 to 295 (MIVAFLLMLEAVVFFVLYSQM). Over 296–320 (PTSLNFFAIHNVEHSIFGIAFEPEQ) the chain is Periplasmic. The helical transmembrane segment at 321–341 (YQALNPFWIMVASPILAAIYN) threads the bilayer. Topologically, residues 342 to 352 (KMGDRLPMPHK) are cytoplasmic. A helical transmembrane segment spans residues 353 to 373 (FAIGMVLCSGAFLVLPWGASF). The Periplasmic portion of the chain corresponds to 374-383 (ANEAGIVSVN). Residues 384–404 (WLILSYALQSIGELMISGLGL) traverse the membrane as a helical segment. The Cytoplasmic segment spans residues 405–414 (AMVAQLVPQR). Residues 415 to 435 (LMGFIMGSWFLTTAAAALIAG) traverse the membrane as a helical segment. Over 436–460 (KVAALTAVPGGEVADPHASLAIYSH) the chain is Periplasmic. The chain crosses the membrane as a helical span at residues 461–481 (VFMQIGLATAVIAVLMLLTAP). Residues 482-490 (KLNRMTLGD) lie on the Cytoplasmic side of the membrane.

This sequence belongs to the major facilitator superfamily. Proton-dependent oligopeptide transporter (POT/PTR) (TC 2.A.17) family. DtpA subfamily.

It localises to the cell inner membrane. In terms of biological role, proton-dependent permease that transports di- and tripeptides. The protein is Dipeptide and tripeptide permease A of Edwardsiella piscicida.